A 513-amino-acid chain; its full sequence is MDEESLQTALRTYDAQLQQVELALGAGLDPSELADLRQLQGDLKELIELTEASLVSVRKSKLLAALDGERPAQEDAEPLALQNAIAETAEVPVAPGAELETVPSRETGPGPTERGQEEDDGEDEEGGAALSGRKVNAPYYSAWGTLEYHNAMIVGTEEADDGSPGVRVLYLYPTHKSLKPCSFFLEGKCRFQENCRFSHGQVVSVDELRPFQDPDLSSLQAGSACLAKRQDGLWYPARITDVDSGYYTVKFDSLLLKETVVEGDSILPPLRTEPAGSSDSDGSDADDPSYARVVEPGAANPGTCSSAFAGWEVHTRGIGSRLLAKMGYEFGKGLGRHAEGRVEPVHAVVLPRGKSLDQCAEILQKRTRAGQAGVSKPPKCRSRGSGPGGRPPPRSVFDFLNEKLKGGAPGAPEVGAAPPGRSGKEVYHASRSTKRALSLRLLQTEEKIEQTQRAIRGIQEALARNAGRHSVTTAQLQEKLAGAQQQLGQLRAQEAGLQREQRKADTHKKMTEF.

Methionine 1 bears the N-acetylmethionine mark. The segment at 90–131 (EVPVAPGAELETVPSRETGPGPTERGQEEDDGEDEEGGAALS) is disordered. The segment covering 116–126 (QEEDDGEDEEG) has biased composition (acidic residues). The C3H1-type zinc-finger motif lies at 176–202 (KSLKPCSFFLEGKCRFQENCRFSHGQV). The interval 267–296 (LPPLRTEPAGSSDSDGSDADDPSYARVVEP) is disordered. 2 positions are modified to phosphoserine: serine 278 and serine 355. A G-patch domain is found at 315–361 (TRGIGSRLLAKMGYEFGKGLGRHAEGRVEPVHAVVLPRGKSLDQCAE). 2 disordered regions span residues 367–394 (TRAG…PPPR) and 492–513 (AQEA…MTEF). Over residues 497-513 (LQREQRKADTHKKMTEF) the composition is skewed to basic and acidic residues.

As to quaternary structure, interacts with CHD4/Mi-2; the interaction is direct.

It localises to the nucleus. Transcription repressor that specifically binds the 5'-GGAG[GA]A[GA]A-3' consensus sequence. Represses transcription by recruiting the chromatin multiprotein complex NuRD to target promoters. Negatively regulates expression of EGFR, a gene involved in cell proliferation, survival and migration. Its ability to repress genes of the EGFR pathway suggest it may act as a tumor suppressor. The protein is Zinc finger CCCH-type with G patch domain-containing protein (ZGPAT) of Bos taurus (Bovine).